Reading from the N-terminus, the 617-residue chain is Prothrombin (617 aa).

Positions 1-24 (MLHVRGLGLPGCLALAALASLVHS) are cleaved as a signal peptide. Residues 25-43 (QHVFLAPQQALSLLQRVRR) constitute a propeptide that is removed on maturation. The 47-residue stretch at 44-90 (ANSGFLEELRKGNLERECVEEQCSYEEAFEALESPQDTDVFWAKYTV) folds into the Gla domain. Residues glutamate 50, glutamate 51, glutamate 58, glutamate 60, glutamate 63, glutamate 64, glutamate 69, glutamate 70, glutamate 73, and glutamate 76 each carry the 4-carboxyglutamate modification. An intrachain disulfide couples cysteine 61 to cysteine 66. 10 cysteine pairs are disulfide-bonded: cysteine 91–cysteine 104, cysteine 109–cysteine 187, cysteine 130–cysteine 170, cysteine 158–cysteine 182, cysteine 215–cysteine 292, cysteine 236–cysteine 276, cysteine 264–cysteine 287, cysteine 332–cysteine 478, cysteine 387–cysteine 403, and cysteine 532–cysteine 546. 2 consecutive Kringle domains span residues 109 to 187 (CAMD…IPVC) and 215 to 292 (CLLE…LNYC). Residues asparagine 120 and asparagine 144 are each glycosylated (N-linked (GlcNAc...) asparagine). One can recognise a Peptidase S1 domain in the interval 360 to 614 (IVEGWDAEKG…LKRWMQKVID (255 aa)). Histidine 402 (charge relay system) is an active-site residue. The N-linked (GlcNAc...) asparagine glycan is linked to asparagine 412. Catalysis depends on aspartate 458, which acts as the Charge relay system. The tract at residues 547–569 (AGFKVNDTKRGDACEGDSGGPFV) is high affinity receptor-binding region which is also known as the TP508 peptide. Asparagine 552 is a glycosylation site (N-linked (GlcNAc...) asparagine). Cysteine 560 and cysteine 590 form a disulfide bridge. The active-site Charge relay system is the serine 564.

This sequence belongs to the peptidase S1 family. As to quaternary structure, heterodimer (named alpha-thrombin) of a light and a heavy chain; disulfide-linked. Forms a heterodimer with SERPINA5. In plasma, interacts (via N-terminus) with alpha-1-microglobulin; this interaction does not prevent the activation of prothrombin to thrombin. The gamma-carboxyglutamyl residues, which bind calcium ions, result from the carboxylation of glutamyl residues by a microsomal enzyme, the vitamin K-dependent carboxylase. The modified residues are necessary for the calcium-dependent interaction with a negatively charged phospholipid surface, which is essential for the conversion of prothrombin to thrombin. In terms of processing, in the penultimate step of the coagulation cascade, prothrombin is converted to thrombin by the prothrombinase complex composed of factor Xa (F10), cofactor Va (F5), and phospholipids. This activation requires factor Xa-catalyzed sequential cleavage at 2 sites, Arg-310 and Arg-359, along 2 possible pathways. In the first pathway, the first cleavage occurs at Arg-310, leading to the formation of the inactive intermediate prethrombin-2. This pathway preferentially occurs on platelets and in the absence of cofactor Va. In the second pathway, the first cleavage occurs at Arg-359, which separates protease domain into 2 chains that remain connected through a disulfide bond and generates the active intermediate meizothrombin. The presence of cofactor Va directs activation along the meizothrombin pathway and greatly accelerates the rate of cleavage at Arg-359, but has a smaller effect on the cleavage of meizothrombin at Arg-310. Meizothrombin accumulates as an intermediate when prothrombinase is assembled on the membrane of red blood cells.

The catalysed reaction is Selective cleavage of Arg-|-Gly bonds in fibrinogen to form fibrin and release fibrinopeptides A and B.. Activity is promoted in the presence of negatively charged surfaces, such as polyphosphate and dextran sulfate. Inhibited by SERPINA5. Its function is as follows. Thrombin, which cleaves bonds after Arg and Lys, converts fibrinogen to fibrin and activates factors V, VII, VIII, XIII, and, in complex with thrombomodulin, protein C. Functions in blood homeostasis, inflammation and wound healing. Activates coagulation factor XI (F11); activation is promoted by the contact with negatively charged surfaces. Triggers the production of pro-inflammatory cytokines, such as MCP-1/CCL2 and IL8/CXCL8, in endothelial cells. This is Prothrombin (F2) from Rattus norvegicus (Rat).